Consider the following 307-residue polypeptide: Ribosomal RNA small subunit methyltransferase H (307 aa).

S-adenosyl-L-methionine contacts are provided by residues 32–34 (GGH), Asp-52, Phe-78, Asp-99, and Gln-106.

It belongs to the methyltransferase superfamily. RsmH family.

Its subcellular location is the cytoplasm. It carries out the reaction cytidine(1402) in 16S rRNA + S-adenosyl-L-methionine = N(4)-methylcytidine(1402) in 16S rRNA + S-adenosyl-L-homocysteine + H(+). In terms of biological role, specifically methylates the N4 position of cytidine in position 1402 (C1402) of 16S rRNA. This chain is Ribosomal RNA small subunit methyltransferase H, found in Caldicellulosiruptor saccharolyticus (strain ATCC 43494 / DSM 8903 / Tp8T 6331).